We begin with the raw amino-acid sequence, 190 residues long: Holliday junction branch migration complex subunit RuvA (190 aa).

The segment at 1–65 (MIGNLRGIVD…ENVTQLYGFI (65 aa)) is domain I. Residues 66-143 (SKEEQQCLRL…KLEINNNHFH (78 aa)) form a domain II region. The segment at 144 to 147 (SISE) is flexible linker. The interval 147-190 (EDALSALINLGYERTKAYDTIKKIEDESPNLDTKDIIRMALKTI) is domain III.

It belongs to the RuvA family. Homotetramer. Forms an RuvA(8)-RuvB(12)-Holliday junction (HJ) complex. HJ DNA is sandwiched between 2 RuvA tetramers; dsDNA enters through RuvA and exits via RuvB. An RuvB hexamer assembles on each DNA strand where it exits the tetramer. Each RuvB hexamer is contacted by two RuvA subunits (via domain III) on 2 adjacent RuvB subunits; this complex drives branch migration. In the full resolvosome a probable DNA-RuvA(4)-RuvB(12)-RuvC(2) complex forms which resolves the HJ.

The protein localises to the cytoplasm. In terms of biological role, the RuvA-RuvB-RuvC complex processes Holliday junction (HJ) DNA during genetic recombination and DNA repair, while the RuvA-RuvB complex plays an important role in the rescue of blocked DNA replication forks via replication fork reversal (RFR). RuvA specifically binds to HJ cruciform DNA, conferring on it an open structure. The RuvB hexamer acts as an ATP-dependent pump, pulling dsDNA into and through the RuvAB complex. HJ branch migration allows RuvC to scan DNA until it finds its consensus sequence, where it cleaves and resolves the cruciform DNA. The polypeptide is Holliday junction branch migration complex subunit RuvA (Wolbachia pipientis subsp. Culex pipiens (strain wPip)).